Reading from the N-terminus, the 187-residue chain is Decorin-binding protein B (187 aa).

Positions 1 to 20 are cleaved as a signal peptide; the sequence is MKIGKLNSIVIALFFKLLVA.

It belongs to the decorin-binding protein family.

Functionally, binds to decorin which may mediate the adherence of B.burgdorferi to collagen fibers in skin and other tissues. The protein is Decorin-binding protein B (dbpB) of Borreliella burgdorferi (strain ATCC 35210 / DSM 4680 / CIP 102532 / B31) (Borrelia burgdorferi).